The following is a 318-amino-acid chain: MSHFPTLHILILVIANLQIQCFAFVSQSRGFCATGPPTESLKAEYRRLSALGSQSYNPVDSESRAAITPIVIDTWFHIITGEAGTELISDEMIADQLSYLQNAYWNATISYRLQGVTRSANDTWARNEDEMAMKTVLRRGSYRTLNVYFHTDLQASPNAGARAFDIVRRELGVSQQQPTSMLGFCTLPDPSINASSPPSTYIKDGCNVLAETMPGGSLAHYNRGGTAIHEIGHWNGLLHTFEGESCSSDNEGDFIADTPQQSKPTEGCPAQKDSCPELPGFDAIHNFMDYSSDECYDSFTPDQVSRMRSMWFAMRDGK.

Residues 1 to 23 (MSHFPTLHILILVIANLQIQCFA) form the signal peptide. Residues Asn-106, Asn-121, and Asn-193 are each glycosylated (N-linked (GlcNAc...) asparagine). A Zn(2+)-binding site is contributed by His-229. Glu-230 is an active-site residue. Zn(2+) is bound at residue His-233. Cys-268 and Cys-295 are disulfide-bonded.

The protein belongs to the peptidase M43B family.

The protein localises to the secreted. Functionally, secreted metalloproteinase that allows assimilation of proteinaceous substrates. This is Extracellular metalloprotease AO090012001025 from Aspergillus oryzae (strain ATCC 42149 / RIB 40) (Yellow koji mold).